We begin with the raw amino-acid sequence, 731 residues long: Polyadenylate-binding protein, cytoplasmic and nuclear (731 aa).

Residues 1–10 are compositionally biased toward polar residues; that stretch reads MSADVSTTPA. Residues 1–51 form a disordered region; that stretch reads MSADVSTTPAAENVNGAAEASPAPAAAAPSATTPEVTAVENSTPAPAANQP. The segment covering 17 to 39 has biased composition (low complexity); that stretch reads AAEASPAPAAAAPSATTPEVTAV. RRM domains lie at 54-132, 142-219, 235-312, and 338-472; these read ASLY…WSQR, GNVF…HHIS, TNVY…RAQK, and VNLY…LAQR. 2 disordered regions span residues 369-429 and 603-665; these read VMRD…SDKK and GGRG…NAQT. Gly residues predominate over residues 616-627; sequence GMRGGPGYGQGR. Over residues 645–656 the composition is skewed to low complexity; the sequence is QNAAAPAGPQEG. A PABC domain is found at 658–731; sequence AGGVNAQTLG…MRPLAFTMST (74 aa).

The protein belongs to the polyadenylate-binding protein type-1 family.

The protein localises to the cytoplasm. It is found in the nucleus. Binds the poly(A) tail of mRNA. Appears to be an important mediator of the multiple roles of the poly(A) tail in mRNA biogenesis, stability and translation. In the nucleus, involved in both mRNA cleavage and polyadenylation. Is also required for efficient mRNA export to the cytoplasm. Acts in concert with a poly(A)-specific nuclease (PAN) to affect poly(A) tail shortening, which may occur concomitantly with either nucleocytoplasmic mRNA transport or translational initiation. In the cytoplasm, stimulates translation initiation and regulates mRNA decay through translation termination-coupled poly(A) shortening, probably mediated by PAN. In Aspergillus niger (strain ATCC MYA-4892 / CBS 513.88 / FGSC A1513), this protein is Polyadenylate-binding protein, cytoplasmic and nuclear (pab1).